The chain runs to 368 residues: MNKTITALAIIMASFAANASVLPETPVPFKSGTGAIDNDTVYIGLGSAGTAWYKLDTQAKDKKWTALAAFPGGPRDQATSAFIDGNLYVFGGIGKNSEGLTQVFNDVHKYNPKTNSWVKLMSHAPMGMAGHVTFVHNGKAYVTGGVNQNIFNGYFEDLNEAGKDSTAVDKINAYYFDKKAEDYFFNKFLLSFDPSTQQWSYAGESPWYGTAGAAVVNKGDKTWLINGEAKPGLRTDAVFELDFTGNNLKWNKLAPVSSPDGVAGGFAGISNDSLIFAGGAGFKGSRENYQNGKNYAHEGLKKSYSTDIHLWHNGKWDKSGELSQGRAYGVSLPWNNSLLIIGGETAGGKAVTDSVFISVKDNKVTVQN.

The first 19 residues, 1–19, serve as a signal peptide directing secretion; it reads MNKTITALAIIMASFAANA. Kelch repeat units lie at residues 40 to 84, 86 to 137, 139 to 173, 174 to 219, 222 to 265, 287 to 336, and 338 to 367; these read TVYI…AFID, NLYV…FVHN, KAYVTGGVNQNIFNGYFEDLNEAGKDSTAVDKINA, YYFD…VNKG, TWLI…VAGG, ENYQ…PWNN, and LLIIGGETAGGKAVTDSVFISVKDNKVTVQ. The Proton acceptor role is filled by glutamate 228.

The protein belongs to the NanM family. As to quaternary structure, homodimer.

It is found in the periplasm. It carries out the reaction N-acetyl-alpha-neuraminate = N-acetyl-beta-neuraminate. Its function is as follows. Converts alpha-N-acetylneuranimic acid (Neu5Ac) to the beta-anomer, accelerating the equilibrium between the alpha- and beta-anomers. Probably facilitates sialidase-negative bacteria to compete successfully for limited amounts of extracellular Neu5Ac, which is likely taken up in the beta-anomer. In addition, the rapid removal of sialic acid from solution might be advantageous to the bacterium to damp down host responses. This Escherichia coli O139:H28 (strain E24377A / ETEC) protein is N-acetylneuraminate epimerase.